The sequence spans 364 residues: Gap junction delta-4 protein (364 aa).

Over 1–19 (MEKLNLLGFLIITLNCNVT) the chain is Cytoplasmic. The helical transmembrane segment at 20–40 (IMGMIWLIVEVLLRMLVVVLA) threads the bilayer. Residues 41–76 (GSPIYEDEQERFICNTLQPGCANVCYDLFSPVSPLR) are Extracellular-facing. Residues 77-97 (FWLVQSLALLLPSVVFGTYTL) form a helical membrane-spanning segment. The Cytoplasmic portion of the chain corresponds to 98 to 128 (HRGAKLAAVGGACRPQVPDLSTAYLVHLLLR). Residues 129–149 (MLLEAGLAFLHYFLFGFSVPA) traverse the membrane as a helical segment. The Extracellular segment spans residues 150-173 (RVSCSHVPCSGAVDCYVSRPTEKS). The chain crosses the membrane as a helical span at residues 174-194 (LLILFFWAVSALSFLLSLADL). The Cytoplasmic segment spans residues 195–364 (LWILPRRKTL…HLRTKKSEWV (170 aa)). Over residues 331–340 (HLARHSSASK) the composition is skewed to polar residues. Residues 331-364 (HLARHSSASKPQAPCRLTTSGSAPHLRTKKSEWV) form a disordered region.

Belongs to the connexin family. Delta-type subfamily. As to quaternary structure, a connexon is composed of a hexamer of connexins.

It is found in the cell membrane. The protein localises to the cell junction. The protein resides in the gap junction. Functionally, one gap junction consists of a cluster of closely packed pairs of transmembrane channels, the connexons, through which materials of low MW diffuse from one cell to a neighboring cell. The sequence is that of Gap junction delta-4 protein (Gjd4) from Mus musculus (Mouse).